A 775-amino-acid chain; its full sequence is Suppressor of glycerol defect protein 1 (775 aa).

2 stretches are compositionally biased toward basic residues: residues 1–11 (MRPIKKSRSLK) and 28–49 (RRGKRNHNLPHREKRKFARISR). 2 disordered regions span residues 1–101 (MRPI…LLDP) and 152–253 (IDDI…GGDK). Composition is skewed to basic and acidic residues over residues 52-79 (NGYENRKITEEGDSKSSELNDDYLDAHR), 177-193 (TGDHGSVDELESEREGN), and 209-223 (DEFHQPETKPIRMDP). Residues 262 to 463 (RRKLQGSLNK…ESITNLKENK (202 aa)) enclose the MIF4G domain. An MI domain is found at 565–689 (TLRTSIFVAL…PLTILKHVDF (125 aa)).

Belongs to the CWC22 family.

Its subcellular location is the nucleus. The protein resides in the nucleolus. Its function is as follows. Involved in osmoregulatory glycerol response. The polypeptide is Suppressor of glycerol defect protein 1 (sgd1) (Schizosaccharomyces pombe (strain 972 / ATCC 24843) (Fission yeast)).